A 268-amino-acid polypeptide reads, in one-letter code: HTH-type transcriptional activator RhaS (268 aa).

The HTH araC/xylS-type domain occupies 171–268; that stretch reads RQMIRWLENN…YSIAPRELRI (98 aa). 2 DNA-binding regions (H-T-H motif) span residues 188–209 and 236–259; these read EELA…KSQT and IINI…KNEY.

Binds DNA as a dimer.

Its subcellular location is the cytoplasm. Functionally, activates expression of the rhaBAD and rhaT operons. In Mannheimia succiniciproducens (strain KCTC 0769BP / MBEL55E), this protein is HTH-type transcriptional activator RhaS.